A 215-amino-acid polypeptide reads, in one-letter code: Large ribosomal subunit protein bL25 (215 aa).

Composition is skewed to polar residues over residues 1–19 and 206–215; these read MAKSTVNKLSVSVRTNTGK and ENKTAATESE. Disordered regions lie at residues 1–29 and 190–215; these read MAKSTVNKLSVSVRTNTGKGASRRARRDG and AKYAGEAHEAPEVGTAENKTAATESE.

The protein belongs to the bacterial ribosomal protein bL25 family. CTC subfamily. Part of the 50S ribosomal subunit; part of the 5S rRNA/L5/L18/L25 subcomplex. Contacts the 5S rRNA. Binds to the 5S rRNA independently of L5 and L18.

In terms of biological role, this is one of the proteins that binds to the 5S RNA in the ribosome where it forms part of the central protuberance. The sequence is that of Large ribosomal subunit protein bL25 from Mycobacterium leprae (strain TN).